A 730-amino-acid chain; its full sequence is 1,4-alpha-glucan branching enzyme GlgB (730 aa).

Asp-405 serves as the catalytic Nucleophile. Catalysis depends on Glu-458, which acts as the Proton donor.

It belongs to the glycosyl hydrolase 13 family. GlgB subfamily. As to quaternary structure, monomer.

The catalysed reaction is Transfers a segment of a (1-&gt;4)-alpha-D-glucan chain to a primary hydroxy group in a similar glucan chain.. It functions in the pathway glycan biosynthesis; glycogen biosynthesis. Its function is as follows. Catalyzes the formation of the alpha-1,6-glucosidic linkages in glycogen by scission of a 1,4-alpha-linked oligosaccharide from growing alpha-1,4-glucan chains and the subsequent attachment of the oligosaccharide to the alpha-1,6 position. The chain is 1,4-alpha-glucan branching enzyme GlgB from Haemophilus influenzae (strain 86-028NP).